The following is a 463-amino-acid chain: Argininosuccinate lyase (463 aa).

This sequence belongs to the lyase 1 family. Argininosuccinate lyase subfamily.

It localises to the cytoplasm. It carries out the reaction 2-(N(omega)-L-arginino)succinate = fumarate + L-arginine. It functions in the pathway amino-acid biosynthesis; L-arginine biosynthesis; L-arginine from L-ornithine and carbamoyl phosphate: step 3/3. The polypeptide is Argininosuccinate lyase (Dinoroseobacter shibae (strain DSM 16493 / NCIMB 14021 / DFL 12)).